A 330-amino-acid chain; its full sequence is Ferredoxin--NADP reductase (330 aa).

FAD contacts are provided by Glu35, Gln43, Tyr48, Val90, Phe123, Asp285, and Thr326.

It belongs to the ferredoxin--NADP reductase type 2 family. As to quaternary structure, homodimer. Requires FAD as cofactor.

The catalysed reaction is 2 reduced [2Fe-2S]-[ferredoxin] + NADP(+) + H(+) = 2 oxidized [2Fe-2S]-[ferredoxin] + NADPH. This Streptococcus pyogenes serotype M3 (strain ATCC BAA-595 / MGAS315) protein is Ferredoxin--NADP reductase.